The following is a 70-amino-acid chain: ATP synthase subunit c (70 aa).

Transmembrane regions (helical) follow at residues 3–23 (ALAA…IGIA) and 44–64 (LFFI…VIAI).

The protein belongs to the ATPase C chain family. F-type ATPases have 2 components, F(1) - the catalytic core - and F(0) - the membrane proton channel. F(1) has five subunits: alpha(3), beta(3), gamma(1), delta(1), epsilon(1). F(0) has three main subunits: a(1), b(2) and c(10-14). The alpha and beta chains form an alternating ring which encloses part of the gamma chain. F(1) is attached to F(0) by a central stalk formed by the gamma and epsilon chains, while a peripheral stalk is formed by the delta and b chains.

It is found in the cell membrane. F(1)F(0) ATP synthase produces ATP from ADP in the presence of a proton or sodium gradient. F-type ATPases consist of two structural domains, F(1) containing the extramembraneous catalytic core and F(0) containing the membrane proton channel, linked together by a central stalk and a peripheral stalk. During catalysis, ATP synthesis in the catalytic domain of F(1) is coupled via a rotary mechanism of the central stalk subunits to proton translocation. Functionally, key component of the F(0) channel; it plays a direct role in translocation across the membrane. A homomeric c-ring of between 10-14 subunits forms the central stalk rotor element with the F(1) delta and epsilon subunits. In Caldicellulosiruptor saccharolyticus (strain ATCC 43494 / DSM 8903 / Tp8T 6331), this protein is ATP synthase subunit c.